A 1030-amino-acid polypeptide reads, in one-letter code: Toll-like receptor 9 (1030 aa).

Positions 1–24 (MGPRCTLHPLSLLVQVTALAAALA) are cleaved as a signal peptide. Residues 25-816 (QGRLPAFLPC…LCLDETLSWN (792 aa)) lie on the Extracellular side of the membrane. A disulfide bridge connects residues cysteine 34 and cysteine 44. 46 to 50 (WLFLK) lines the DNA pocket. LRR repeat units lie at residues 61–84 (RANV…DFVH), 86–109 (SSLR…HFPC), 121–146 (VPTL…SLVS), 149–165 (LSRT…LTGL), 166–189 (HALR…ALEV), 197–220 (LGNL…LPPS), 222–241 (ETLL…DLAN), 242–267 (LTAL…CREC), 282–305 (LSRL…WFRG), 307–331 (DRLQ…AFQG), 332–355 (LARL…HLHL), 362–385 (LRSL…TLQP), 389–412 (LPML…IFGA), 414–439 (PGLL…TREV), 469–493 (CKAF…MFAR), 495–518 (SRLE…QFVP), 519–542 (LTSL…SFTE), 544–571 (PRLE…SFVA), 573–597 (LPAL…LCSA), 599–621 (LCAL…LYLR), 626–649 (LRSL…ALDN), 651–674 (PKSL…SLTL), 675–698 (LPKL…SLPS), 700–722 (TQLR…FFAL), 723–746 (AKQL…WFGS), and 748–771 (VGNL…TFVG). N-linked (GlcNAc...) asparagine glycosylation occurs at asparagine 63. Residues 71–76 (SNRIHH) and 94–108 (KWNC…MHFP) contribute to the DNA site. The cysteines at positions 97 and 109 are disulfide-linked. Asparagine 128 carries an N-linked (GlcNAc...) asparagine glycan. Residues tyrosine 131, arginine 151, and 178-180 (YYK) contribute to the DNA site. Cysteine 177 and cysteine 183 are joined by a disulfide. Asparagine 199 carries N-linked (GlcNAc...) asparagine glycosylation. Tyrosine 207 is a binding site for DNA. N-linked (GlcNAc...) asparagine glycosylation is found at asparagine 209 and asparagine 241. Intrachain disulfides connect cysteine 254–cysteine 267 and cysteine 257–cysteine 264. The S-palmitoyl cysteine moiety is linked to residue cysteine 257. Arginine 261 lines the DNA pocket. The S-palmitoyl cysteine moiety is linked to residue cysteine 264. Residue asparagine 339 is glycosylated (N-linked (GlcNAc...) asparagine). An intrachain disulfide couples cysteine 469 to cysteine 499. An N-linked (GlcNAc...) asparagine glycan is attached at asparagine 512. Asparagine 566 is a glycosylation site (N-linked (GlcNAc...) asparagine). 2 N-linked (GlcNAc...) asparagine glycosylation sites follow: asparagine 668 and asparagine 693. Asparagine 730 carries an N-linked (GlcNAc...) asparagine glycan. 2 disulfide bridges follow: cysteine 763–cysteine 789 and cysteine 765–cysteine 808. The helical transmembrane segment at 817-837 (CFGISLLAMALGLVVPMLHHL) threads the bilayer. Residues 838 to 1030 (CGWDLWYCFH…NFCRGPTTAE (193 aa)) are Cytoplasmic-facing. The region spanning 865–1010 (LFYDAFVVFD…SFWAQLGTAL (146 aa)) is the TIR domain.

This sequence belongs to the Toll-like receptor family. As to quaternary structure, monomer and homodimer. Exists as a monomer in the absence of unmethylated cytidine-phosphate-guanosine (CpG) ligand. Proteolytic processing of an insertion loop (Z-loop) is required for homodimerization upon binding to the unmethylated CpG ligand leading to its activation. Interacts with MYD88 via their respective TIR domains. Interacts with BTK. Interacts (via transmembrane domain) with UNC93B1. Interacts with CD300LH; the interaction may promote full activation of TLR9-triggered innate responses. Interacts with CNPY3 and HSP90B1; this interaction is required for proper folding in the endoplasmic reticulum. Interacts with SMPDL3B. Interacts with CD82; this interaction is essential for TLR9-dependent myddosome formation in response to CpG stimulation. Post-translationally, activated by proteolytic cleavage of the flexible loop between repeats LRR14 and LRR15 within the ectodomain. Cleavage requires UNC93B1. Proteolytically processed by first removing the majority of the ectodomain by either asparagine endopeptidase (AEP) or a cathepsin followed by a trimming event that is solely cathepsin mediated and required for optimal receptor signaling. Palmitoylated by ZDHHC3 in the Golgi regulates TLR9 trafficking from the Golgi to endosomes. Depalmitoylation by PPT1 controls the release of TLR9 from UNC93B1 in endosomes.

It is found in the endoplasmic reticulum membrane. Its subcellular location is the endosome. It localises to the lysosome. The protein localises to the cytoplasmic vesicle. The protein resides in the phagosome. Key component of innate and adaptive immunity. TLRs (Toll-like receptors) control host immune response against pathogens through recognition of molecular patterns specific to microorganisms. TLR9 is a nucleotide-sensing TLR which is activated by unmethylated cytidine-phosphate-guanosine (CpG) dinucleotides. Acts via MYD88 and TRAF6, leading to NF-kappa-B activation, cytokine secretion and the inflammatory response. Upon CpG stimulation, induces B-cell proliferation, activation, survival and antibody production. The chain is Toll-like receptor 9 (TLR9) from Sus scrofa (Pig).